The sequence spans 167 residues: Peroxiredoxin Pen c 3 (167 aa).

Residues 3–167 (LKAGDSFPEG…SRADHVLKQL (165 aa)) enclose the Thioredoxin domain. Cys60 acts as the Cysteine sulfenic acid (-SOH) intermediate in catalysis.

It belongs to the peroxiredoxin family. Prx5 subfamily. In terms of assembly, homodimer; disulfide-linked, upon oxidation.

The catalysed reaction is a hydroperoxide + [thioredoxin]-dithiol = an alcohol + [thioredoxin]-disulfide + H2O. In terms of biological role, thiol-specific peroxidase that catalyzes the reduction of hydrogen peroxide and organic hydroperoxides to water and alcohols, respectively. Plays a role in cell protection against oxidative stress by detoxifying peroxides and as sensor of hydrogen peroxide-mediated signaling events. This Penicillium citrinum protein is Peroxiredoxin Pen c 3.